The following is a 200-amino-acid chain: Crossover junction endodeoxyribonuclease RuvC (200 aa).

Active-site residues include aspartate 18, glutamate 78, and aspartate 151. Aspartate 18, glutamate 78, and aspartate 151 together coordinate Mg(2+).

The protein belongs to the RuvC family. Homodimer which binds Holliday junction (HJ) DNA. The HJ becomes 2-fold symmetrical on binding to RuvC with unstacked arms; it has a different conformation from HJ DNA in complex with RuvA. In the full resolvosome a probable DNA-RuvA(4)-RuvB(12)-RuvC(2) complex forms which resolves the HJ. Mg(2+) is required as a cofactor.

Its subcellular location is the cytoplasm. The catalysed reaction is Endonucleolytic cleavage at a junction such as a reciprocal single-stranded crossover between two homologous DNA duplexes (Holliday junction).. Its function is as follows. The RuvA-RuvB-RuvC complex processes Holliday junction (HJ) DNA during genetic recombination and DNA repair. Endonuclease that resolves HJ intermediates. Cleaves cruciform DNA by making single-stranded nicks across the HJ at symmetrical positions within the homologous arms, yielding a 5'-phosphate and a 3'-hydroxyl group; requires a central core of homology in the junction. The consensus cleavage sequence is 5'-(A/T)TT(C/G)-3'. Cleavage occurs on the 3'-side of the TT dinucleotide at the point of strand exchange. HJ branch migration catalyzed by RuvA-RuvB allows RuvC to scan DNA until it finds its consensus sequence, where it cleaves and resolves the cruciform DNA. The chain is Crossover junction endodeoxyribonuclease RuvC from Cytophaga hutchinsonii (strain ATCC 33406 / DSM 1761 / CIP 103989 / NBRC 15051 / NCIMB 9469 / D465).